A 58-amino-acid chain; its full sequence is ComX pheromone (58 aa).

The propeptide occupies 1–52 (MKQDMIDYLMKNPQVLTKLENGEASLIGIPDKLIPSIVDIFNKKMTLSKKCK). The 3'-geranyl-2',N2-cyclotryptophan; in strain RO-E-2 /NRRL B-23055 moiety is linked to residue Trp56.

In terms of assembly, interacts directly with the sensor histidine kinase ComP and stimulates its activity. In terms of processing, trp-56 is modified by geranylation, which is essential for activity. Modified by the tryptophan prenyltransferase ComQ before export to the extracellular environment. The type of isoprenyl derivative differs among the different pherotypes and depends on ComX primary sequence.

Its subcellular location is the secreted. Part of a major quorum-sensing system that regulates the development of genetic competence. Acts through the activation of the two-component regulatory system ComP/ComA composed of a sensor histidine kinase, ComP, and a response regulator, ComA. The protein is ComX pheromone of Bacillus spizizenii (Bacillus subtilis subsp. spizizenii).